A 155-amino-acid chain; its full sequence is SsrA-binding protein (155 aa).

The protein belongs to the SmpB family.

Its subcellular location is the cytoplasm. Required for rescue of stalled ribosomes mediated by trans-translation. Binds to transfer-messenger RNA (tmRNA), required for stable association of tmRNA with ribosomes. tmRNA and SmpB together mimic tRNA shape, replacing the anticodon stem-loop with SmpB. tmRNA is encoded by the ssrA gene; the 2 termini fold to resemble tRNA(Ala) and it encodes a 'tag peptide', a short internal open reading frame. During trans-translation Ala-aminoacylated tmRNA acts like a tRNA, entering the A-site of stalled ribosomes, displacing the stalled mRNA. The ribosome then switches to translate the ORF on the tmRNA; the nascent peptide is terminated with the 'tag peptide' encoded by the tmRNA and targeted for degradation. The ribosome is freed to recommence translation, which seems to be the essential function of trans-translation. The chain is SsrA-binding protein from Bacillus cereus (strain 03BB102).